Here is a 316-residue protein sequence, read N- to C-terminus: Actinorhodin polyketide synthase bifunctional cyclase/dehydratase (316 aa).

The protein operates within antibiotic biosynthesis; actinorhodin biosynthesis. Its function is as follows. Is needed for correct cyclization of the oligoketide leading to isochromanequinone formation. This chain is Actinorhodin polyketide synthase bifunctional cyclase/dehydratase, found in Streptomyces coelicolor (strain ATCC BAA-471 / A3(2) / M145).